The chain runs to 352 residues: Inhibin beta C chain (352 aa).

An N-terminal signal peptide occupies residues 1-18; the sequence is MTSSLLLAFLLLAPTTVA. Positions 19–236 are excised as a propeptide; it reads TPRAGGQCPA…VGGKHQIHRR (218 aa). N110, N143, and N161 each carry an N-linked (GlcNAc...) asparagine glycan. 4 cysteine pairs are disulfide-bonded: C240–C248, C247–C317, C276–C349, and C280–C351.

It belongs to the TGF-beta family. In terms of assembly, homodimeric or heterodimeric through association with alpha and beta subunits, linked by one or more disulfide bonds. Inhibins are heterodimers of one alpha and one beta subunit. Activins are homo- or heterodimers of beta subunits only. Expressed in benign prostatic hyperplasia.

It is found in the secreted. Functionally, inhibins and activins inhibit and activate, respectively, the secretion of follitropin by the pituitary gland. Inhibins/activins are involved in regulating a number of diverse functions such as hypothalamic and pituitary hormone secretion, gonadal hormone secretion, germ cell development and maturation, erythroid differentiation, insulin secretion, nerve cell survival, embryonic axial development or bone growth, depending on their subunit composition. Inhibins appear to oppose the functions of activins. This chain is Inhibin beta C chain (INHBC), found in Homo sapiens (Human).